A 92-amino-acid polypeptide reads, in one-letter code: YcgL domain-containing protein PBPRA1080 (92 aa).

Residues 1-84 enclose the YcgL domain; the sequence is MLCSIYKSSK…PVTNLLHQYK (84 aa).

In Photobacterium profundum (strain SS9), this protein is YcgL domain-containing protein PBPRA1080.